We begin with the raw amino-acid sequence, 143 residues long: Nucleoside diphosphate kinase (143 aa).

6 residues coordinate ATP: lysine 11, phenylalanine 59, arginine 87, threonine 93, arginine 104, and asparagine 114. Histidine 117 functions as the Pros-phosphohistidine intermediate in the catalytic mechanism.

The protein belongs to the NDK family. Homotetramer. Mg(2+) is required as a cofactor.

The protein resides in the cytoplasm. The catalysed reaction is a 2'-deoxyribonucleoside 5'-diphosphate + ATP = a 2'-deoxyribonucleoside 5'-triphosphate + ADP. It carries out the reaction a ribonucleoside 5'-diphosphate + ATP = a ribonucleoside 5'-triphosphate + ADP. In terms of biological role, major role in the synthesis of nucleoside triphosphates other than ATP. The ATP gamma phosphate is transferred to the NDP beta phosphate via a ping-pong mechanism, using a phosphorylated active-site intermediate. In Shewanella sediminis (strain HAW-EB3), this protein is Nucleoside diphosphate kinase.